The chain runs to 445 residues: C4-dicarboxylate transport protein (445 aa).

8 helical membrane passes run 24 to 44, 62 to 82, 105 to 125, 163 to 183, 201 to 221, 237 to 257, 322 to 342, and 370 to 390; these read VLYIQVLIAIVLGVLVGWLSP, LIKMVIAPIIFCTVVSGIAHI, FALILGLVVGNLLPVGHGLAA, GDILQVLLFAILFGFALMALG, FGVIAIVMKAAPVGAFGAMAF, LVALFYATAALFVFVVLGVIA, IYMTLATLFIAQALGIELSFS, and AGTLAAVNPALVPGMAIVFSI.

This sequence belongs to the dicarboxylate/amino acid:cation symporter (DAACS) (TC 2.A.23) family.

The protein resides in the cell inner membrane. Responsible for the transport of dicarboxylates such as succinate, fumarate, and malate from the periplasm across the membrane. This chain is C4-dicarboxylate transport protein, found in Rhodopseudomonas palustris (strain HaA2).